The following is a 1212-amino-acid chain: Metabotropic glutamate receptor 5 (1212 aa).

An N-terminal signal peptide occupies residues 1-20 (MVLLLILSVLLLKEDVRGSA). Over 22-580 (SSERRVVAHM…QYLRWGDPEP (559 aa)) the chain is Extracellular. Cys-57 and Cys-99 are oxidised to a cystine. L-glutamate is bound at residue Tyr-64. A glycan (N-linked (GlcNAc...) asparagine) is linked at Asn-88. Residues Ser-152 and 173–175 (SAT) each bind L-glutamate. A glycan (N-linked (GlcNAc...) asparagine) is linked at Asn-210. Position 223 (Tyr-223) interacts with L-glutamate. 8 cysteine pairs are disulfide-bonded: Cys-241–Cys-530, Cys-276–Cys-278, Cys-365–Cys-381, Cys-419–Cys-426, Cys-511–Cys-531, Cys-515–Cys-534, Cys-537–Cys-549, and Cys-552–Cys-565. L-glutamate is bound at residue Asp-305. Residues Asn-378 and Asn-382 are each glycosylated (N-linked (GlcNAc...) asparagine). Lys-396 serves as a coordination point for L-glutamate. Asn-445 is a glycosylation site (N-linked (GlcNAc...) asparagine). Residues 581-603 (IAAVVFACLGLLATLFVTVVFII) traverse the membrane as a helical segment. Over 604 to 613 (YRDTPVVKSS) the chain is Cytoplasmic. Residues 614–636 (SRELCYIILAGICLGYLCTFCLI) traverse the membrane as a helical segment. Topologically, residues 637–644 (AKPKQIYC) are extracellular. A disulfide bridge links Cys-644 with Cys-733. A helical membrane pass occupies residues 645 to 667 (YLQRIGIGLSPAMSYSALVTKTN). Over 668-693 (RIARILAGSKKKICTKKPRFMSACAQ) the chain is Cytoplasmic. Residues 694 to 714 (LVIAFILICIQLGIIVALFIM) form a helical membrane-spanning segment. At 715–737 (EPPDIMHDYPSIREVYLICNTTN) the chain is on the extracellular side. Residue Asn-734 is glycosylated (N-linked (GlcNAc...) asparagine). Residues 738–759 (LGVVTPLGYNGLLILSCTFYAF) traverse the membrane as a helical segment. At 760–772 (KTRNVPANFNEAK) the chain is on the cytoplasmic side. The chain crosses the membrane as a helical span at residues 773-795 (YIAFTMYTTCIIWLAFVPIYFGS). The Extracellular segment spans residues 796–798 (NYK). The helical transmembrane segment at 799–820 (IITMCFSVSLSATVALGCMFVP) threads the bilayer. Over 821 to 1212 (KVYIILAKPE…RDYTQSSSSL (392 aa)) the chain is Cytoplasmic. Phosphoserine is present on Ser-861. Residues Arg-869 and Arg-925 each carry the omega-N-methylarginine modification. Disordered stretches follow at residues 937–971 (INKK…GGSA), 1010–1056 (FPAP…SQGS), and 1132–1191 (GAQA…ALCI). Residues 961–971 (LGAGAGAGGSA) show a composition bias toward gly residues. Phosphoserine occurs at positions 1018 and 1020. The span at 1132-1153 (GAQAAGDAARESPAAGPEAAAA) shows a compositional bias: low complexity. Over residues 1174-1185 (DSGSTTPNSPVS) the composition is skewed to polar residues.

It belongs to the G-protein coupled receptor 3 family. As to quaternary structure, the PPXXF motif binds HOMER1, HOMER2 and HOMER3. Interacts with SIAH1, RYR1, RYR2, ITPR1, SHANK1, SHANK3 and TAMALIN. Interacts with NCDN. Isoform 2 interacts with NECAB2. Interacts with CAMK2A.

It localises to the cell membrane. In terms of biological role, G-protein coupled receptor for glutamate. Ligand binding causes a conformation change that triggers signaling via guanine nucleotide-binding proteins (G proteins) and modulates the activity of down-stream effectors. Signaling activates a phosphatidylinositol-calcium second messenger system and generates a calcium-activated chloride current. Plays an important role in the regulation of synaptic plasticity and the modulation of the neural network activity. The sequence is that of Metabotropic glutamate receptor 5 (GRM5) from Homo sapiens (Human).